Reading from the N-terminus, the 157-residue chain is MGIFTFEDESTTTVAPARLYKALVKDADTIIPKAVEAIQSVEIVEGNGGPGTIKKLTLIEGGETKYVLHKIEAIDEANLGYNYSIVGGIGLPDTIEKISFETKLFEGANGGSIGKVTIKIETKGDAQPNEEEGKAAKARGDAFFKAIENYLIGHPEY.

Asp8 contacts trans-zeatin. The Ca(2+) site is built by Pro32, Val35, and Ile38. Positions 60, 69, 81, and 83 each coordinate trans-zeatin.

Belongs to the BetVI family.

It is found in the cytoplasm. The protein resides in the cytosol. Class II ribonuclease (RNase). Binds to cytokinins. Interacts with melatonin. This is Class 10 plant pathogenesis-related protein 2F from Lupinus luteus (European yellow lupine).